The primary structure comprises 356 residues: uncharacterized protein (356 aa).

Residue 37–44 (TGASSGIG) coordinates NADP(+). Ser168 is a substrate binding site. Catalysis depends on Tyr181, which acts as the Proton acceptor.

Belongs to the short-chain dehydrogenases/reductases (SDR) family.

This is an uncharacterized protein from Bacillus subtilis (strain 168).